Here is a 161-residue protein sequence, read N- to C-terminus: Non-specific lipid transfer protein GPI-anchored 24 (161 aa).

The first 23 residues, 1 to 23 (MAQTTTLILLLATLLVAATTVSG), serve as a signal peptide directing secretion. 4 disulfides stabilise this stretch: Cys-42–Cys-79, Cys-49–Cys-63, Cys-64–Cys-104, and Cys-77–Cys-113. An N-linked (GlcNAc...) asparagine glycan is attached at Asn-92. Residue Asp-138 is the site of GPI-anchor amidated aspartate attachment. Residues 139–161 (AASKLAGTGLVGIVVITIAAMFY) constitute a propeptide, removed in mature form.

It belongs to the plant LTP family.

It localises to the cell membrane. Probable lipid transfer protein. In Arabidopsis thaliana (Mouse-ear cress), this protein is Non-specific lipid transfer protein GPI-anchored 24.